A 642-amino-acid chain; its full sequence is Chaperone protein DnaK (642 aa).

Phosphothreonine; by autocatalysis is present on Thr199. Over residues 570–585 (EELEQASKDGDKEAID) the composition is skewed to basic and acidic residues. The interval 570-642 (EELEQASKDG…FEEVKDDDKK (73 aa)) is disordered. A compositionally biased stretch (low complexity) spans 600–620 (EAAQQQQAQQGAEGAAGGEQQ). The span at 627–642 (DVVDAEFEEVKDDDKK) shows a compositional bias: acidic residues.

This sequence belongs to the heat shock protein 70 family.

Functionally, acts as a chaperone. This Idiomarina loihiensis (strain ATCC BAA-735 / DSM 15497 / L2-TR) protein is Chaperone protein DnaK.